Reading from the N-terminus, the 443-residue chain is Ribosomal protein uS12 methylthiotransferase RimO (443 aa).

One can recognise an MTTase N-terminal domain in the interval 8–118 (PKVGFVSLGC…VVNAVHEVVP (111 aa)). The [4Fe-4S] cluster site is built by Cys17, Cys53, Cys82, Cys151, Cys155, and Cys158. Residues 137 to 375 (LTPRHYAYLK…MAHQQAISAA (239 aa)) enclose the Radical SAM core domain. Residues 378 to 443 (QQRIGKEIEV…DEYDMWAEPI (66 aa)) form the TRAM domain.

It belongs to the methylthiotransferase family. RimO subfamily. [4Fe-4S] cluster is required as a cofactor.

Its subcellular location is the cytoplasm. It catalyses the reaction L-aspartate(89)-[ribosomal protein uS12]-hydrogen + (sulfur carrier)-SH + AH2 + 2 S-adenosyl-L-methionine = 3-methylsulfanyl-L-aspartate(89)-[ribosomal protein uS12]-hydrogen + (sulfur carrier)-H + 5'-deoxyadenosine + L-methionine + A + S-adenosyl-L-homocysteine + 2 H(+). Its function is as follows. Catalyzes the methylthiolation of an aspartic acid residue of ribosomal protein uS12. The polypeptide is Ribosomal protein uS12 methylthiotransferase RimO (Pseudomonas entomophila (strain L48)).